Consider the following 301-residue polypeptide: Structure-specific endonuclease subunit SLX1 (301 aa).

Residues 12 to 95 (AFYCCYLLRS…QHPYQTRFIK (84 aa)) enclose the GIY-YIG domain. The SLX1-type zinc-finger motif lies at 216–283 (CAICEKIVDY…IPTSGQCPNC (68 aa)).

This sequence belongs to the SLX1 family. In terms of assembly, forms a heterodimer with SLX4. A divalent metal cation is required as a cofactor.

It localises to the nucleus. Functionally, catalytic subunit of the SLX1-SLX4 structure-specific endonuclease that resolves DNA secondary structures generated during DNA repair and recombination. Has endonuclease activity towards branched DNA substrates, introducing single-strand cuts in duplex DNA close to junctions with ss-DNA. The protein is Structure-specific endonuclease subunit SLX1 of Eremothecium gossypii (strain ATCC 10895 / CBS 109.51 / FGSC 9923 / NRRL Y-1056) (Yeast).